The chain runs to 146 residues: Large ribosomal subunit protein uL15 (146 aa).

Residues 1 to 13 are compositionally biased toward basic and acidic residues; sequence MKLHELKPAEGSR. Residues 1–57 form a disordered region; sequence MKLHELKPAEGSRKVRNRVGRGTSSGNGKTSGRGQKGQKARSGVGLRPGFEGGQTPL. Gly residues predominate over residues 23–35; it reads TSSGNGKTSGRGQ.

It belongs to the universal ribosomal protein uL15 family. As to quaternary structure, part of the 50S ribosomal subunit.

In terms of biological role, binds to the 23S rRNA. The chain is Large ribosomal subunit protein uL15 from Streptococcus thermophilus (strain ATCC BAA-491 / LMD-9).